Consider the following 246-residue polypeptide: DNA repair protein RecO (246 aa).

It belongs to the RecO family.

Involved in DNA repair and RecF pathway recombination. The chain is DNA repair protein RecO from Methylorubrum extorquens (strain PA1) (Methylobacterium extorquens).